A 459-amino-acid polypeptide reads, in one-letter code: Glycosyl hydrolase family 109 protein (459 aa).

The segment at residues 1-45 (MAGDESRSNPFSRRTLLRTSAAAGAGLGVAGLSTGYGAAQPVRPA) is a signal peptide (tat-type signal). NAD(+) contacts are provided by residues 70–71 (NR), Asp92, 141–144 (WEWH), 161–162 (EC), and Asn190. Substrate-binding positions include Tyr219, Arg238, 250-253 (YPTH), and Tyr332. Residue Tyr250 participates in NAD(+) binding. Residues 440 to 459 (DFTRGRWQTPHPGVDSPKPA) form a disordered region.

This sequence belongs to the Gfo/Idh/MocA family. Glycosyl hydrolase 109 subfamily. NAD(+) serves as cofactor. Post-translationally, predicted to be exported by the Tat system. The position of the signal peptide cleavage has not been experimentally proven.

Glycosidase. This is Glycosyl hydrolase family 109 protein from Saccharopolyspora erythraea (strain ATCC 11635 / DSM 40517 / JCM 4748 / NBRC 13426 / NCIMB 8594 / NRRL 2338).